The primary structure comprises 472 residues: WD repeat-containing protein 88 (472 aa).

Residues 1–22 form a disordered region; the sequence is MASPPRCSPTAHDRECKLPPPS. WD repeat units lie at residues 100 to 139, 143 to 182, 184 to 224, 228 to 267, 271 to 310, 319 to 358, and 361 to 400; these read GHEH…VVRD, RPKA…LLWK, RYDT…TVSV, HHTR…TLLT, AHSN…FRNC, GHEG…RKLS, and GHND…EIPL. Residues 447–472 are disordered; sequence LPADTSSSSSSSERENSPPPRGSKDD. Over residues 458–472 the composition is skewed to basic and acidic residues; sequence SERENSPPPRGSKDD.

This Homo sapiens (Human) protein is WD repeat-containing protein 88 (WDR88).